Here is a 475-residue protein sequence, read N- to C-terminus: Lactate utilization protein B (475 aa).

4Fe-4S ferredoxin-type domains follow at residues 304–334 (GTEF…GHSY) and 353–382 (YDDY…LHEL). Positions 313, 316, 319, 323, 366, 369, and 373 each coordinate [4Fe-4S] cluster.

This sequence belongs to the LutB/YkgF family.

Its function is as follows. Is involved in L-lactate degradation and allows cells to grow with lactate as the sole carbon source. Has probably a role as an electron transporter during oxidation of L-lactate. The chain is Lactate utilization protein B from Geobacillus sp. (strain WCH70).